We begin with the raw amino-acid sequence, 250 residues long: Probable S-methyl-5'-thioinosine phosphorylase (250 aa).

Residues T14 and R56–H57 contribute to the phosphate site. M189 is a substrate binding site. T190 serves as a coordination point for phosphate. N213 to A215 is a binding site for substrate.

This sequence belongs to the PNP/MTAP phosphorylase family. MTAP subfamily. As to quaternary structure, homotrimer.

It carries out the reaction S-methyl-5'-thioinosine + phosphate = 5-(methylsulfanyl)-alpha-D-ribose 1-phosphate + hypoxanthine. It participates in purine metabolism; purine nucleoside salvage. Catalyzes the reversible phosphorylation of S-methyl-5'-thioinosine (MTI) to hypoxanthine and 5-methylthioribose-1-phosphate. Involved in the breakdown of S-methyl-5'-thioadenosine (MTA), a major by-product of polyamine biosynthesis. Catabolism of (MTA) occurs via deamination to MTI and phosphorolysis to hypoxanthine. The chain is Probable S-methyl-5'-thioinosine phosphorylase from Xanthomonas campestris pv. campestris (strain ATCC 33913 / DSM 3586 / NCPPB 528 / LMG 568 / P 25).